Here is a 1143-residue protein sequence, read N- to C-terminus: ATP-dependent helicase/deoxyribonuclease subunit B (1143 aa).

The UvrD-like helicase ATP-binding domain maps to 1–274; sequence MNYMHLGRAG…YGQTVKFQST (274 aa). 7–14 lines the ATP pocket; that stretch reads GRAGTGKT. One can recognise a UvrD-like helicase C-terminal domain in the interval 267–565; that stretch reads QTVKFQSTGL…RFSLVPPSLD (299 aa). 4 residues coordinate [4Fe-4S] cluster: Cys782, Cys1104, Cys1107, and Cys1113.

Belongs to the helicase family. AddB/RexB type 1 subfamily. Heterodimer of AddA and AddB. The cofactor is Mg(2+). [4Fe-4S] cluster serves as cofactor.

The heterodimer acts as both an ATP-dependent DNA helicase and an ATP-dependent, dual-direction single-stranded exonuclease. Recognizes the chi site generating a DNA molecule suitable for the initiation of homologous recombination. The AddB subunit has 5' -&gt; 3' nuclease activity but not helicase activity. The sequence is that of ATP-dependent helicase/deoxyribonuclease subunit B from Exiguobacterium sibiricum (strain DSM 17290 / CCUG 55495 / CIP 109462 / JCM 13490 / 255-15).